The following is a 547-amino-acid chain: Phosphoethanolamine transferase EptA (547 aa).

The Cytoplasmic portion of the chain corresponds to 1 to 9 (MLKRFLKRP). Residues 10-30 (VLGQIAWLLLFSFYIAVCLNI) traverse the membrane as a helical segment. Over 31–47 (AFYKQVLQDLPLNSLRN) the chain is Periplasmic. Residues 48 to 68 (VLVFISMPVVAFSVVNSVLTL) form a helical membrane-spanning segment. Topologically, residues 69-79 (ASFIWLNRLLA) are cytoplasmic. Residues 80-100 (CVFILVGAAAQYFILTYGIII) form a helical membrane-spanning segment. Residues 101–123 (DRSMIANMMDTTPAETFALMTPQ) are Periplasmic-facing. Residues 124–144 (MVLTLGLSGVLAAVIAFWVKI) form a helical membrane-spanning segment. The Cytoplasmic segment spans residues 145 to 154 (RPATPRLRSG). The chain crosses the membrane as a helical span at residues 155–175 (LYRLASVLISILLVILVAAFF). The Periplasmic segment spans residues 176-547 (YKDYASLFRN…ILQPCRRLSE (372 aa)).

Belongs to the phosphoethanolamine transferase family. EptA subfamily.

Its subcellular location is the cell inner membrane. It participates in bacterial outer membrane biogenesis; LPS lipid A biosynthesis. Catalyzes the addition of a phosphoethanolamine moiety to the lipid A. The phosphoethanolamine modification is required for resistance to polymyxin. In Salmonella typhimurium (strain LT2 / SGSC1412 / ATCC 700720), this protein is Phosphoethanolamine transferase EptA (eptA).